We begin with the raw amino-acid sequence, 104 residues long: Protein P3 (104 aa).

Residues 77–99 form a helical membrane-spanning segment; that stretch reads LVFGVPQKTLLLGFGGLLVLGLV.

In terms of assembly, homodimer.

The protein localises to the virion membrane. In Pseudoalteromonas phage PM2 (Bacteriophage PM2), this protein is Protein P3 (III).